The sequence spans 1447 residues: Spike glycoprotein (1447 aa).

The first 28 residues, 1 to 28, serve as a signal peptide directing secretion; the sequence is MKKLFVVLVVMPLIYGDNFPCSKLTNRT. S1 regions lie at residues 17 to 774 and 29 to 774; these read DNFP…FYYY and IGNQ…FYYY. Residues 29–1388 are Virion surface-facing; it reads IGNQWNLIET…NRIETYVKWP (1360 aa). The segment at 655-799 is interaction with host ANPEP; that stretch reads VIYEEGDNIV…DSNDVDCEPV (145 aa). The interval 775–1447 is S2; it reads SIYNYTNDRT…YEPIEKVHVH (673 aa). The interval 1020-1041 is fusion peptide; that stretch reads AGGITLGALGGGAVAIPFAVAV. The segment at 1035 to 1154 is heptad repeat 1 (HR1); that stretch reads IPFAVAVQAR…QVDRLITGRL (120 aa). Coiled coils occupy residues 1102-1146 and 1336-1378; these read QDVV…DAQV and TYLN…LEWL. The interval 1303–1400 is heptad repeat 2 (HR2); the sequence is PDYIDINQTV…VWLLIGLVVI (98 aa). The chain crosses the membrane as a helical span at residues 1389–1408; sequence WYVWLLIGLVVIFCIPLLLF. The Intravirion portion of the chain corresponds to 1409-1447; the sequence is CCCSTGCCGCIGCLGSCCHSICSRRQFENYEPIEKVHVH. A KxHxx motif is present at residues 1443 to 1447; sequence KVHVH.

It belongs to the alphacoronaviruses spike protein family. In terms of assembly, homotrimer. During virus morphogenesis, found in a complex with M and HE proteins. Interacts with host ANPEP.

It localises to the virion membrane. Its subcellular location is the host endoplasmic reticulum-Golgi intermediate compartment membrane. In terms of biological role, S1 region attaches the virion to the cell membrane by interacting with host ANPEP/aminopeptidase N, initiating the infection. Binding to the receptor probably induces conformational changes in the S glycoprotein unmasking the fusion peptide of S2 region and activating membranes fusion. S2 region belongs to the class I viral fusion protein. Under the current model, the protein has at least 3 conformational states: pre-fusion native state, pre-hairpin intermediate state, and post-fusion hairpin state. During viral and target cell membrane fusion, the coiled coil regions (heptad repeats) regions assume a trimer-of-hairpins structure, positioning the fusion peptide in close proximity to the C-terminal region of the ectodomain. The formation of this structure appears to drive apposition and subsequent fusion of viral and target cell membranes. The protein is Spike glycoprotein of Sus scrofa (Pig).